Consider the following 1074-residue polypeptide: DNA primase (1074 aa).

Residues 1012 to 1052 (CVRFKHARARRASARSYLALNVDAHGRLCVCVIQQCFAAKC) form a CHC2-type zinc finger.

This sequence belongs to the herpesviridae DNA primase family. In terms of assembly, associates with the helicase and the primase-associated factor to form the helicase-primase factor.

The protein resides in the host nucleus. Essential component of the helicase/primase complex. Unwinds the DNA at the replication forks and generates single-stranded DNA for both leading and lagging strand synthesis. The primase initiates primer synthesis and thereby produces large amount of short RNA primers on the lagging strand that the polymerase elongates using dNTPs. This Gallus gallus (Chicken) protein is DNA primase (MDV066).